The following is a 216-amino-acid chain: Phosphoribosylaminoimidazole-succinocarboxamide synthase (216 aa).

This sequence belongs to the SAICAR synthetase family.

The enzyme catalyses 5-amino-1-(5-phospho-D-ribosyl)imidazole-4-carboxylate + L-aspartate + ATP = (2S)-2-[5-amino-1-(5-phospho-beta-D-ribosyl)imidazole-4-carboxamido]succinate + ADP + phosphate + 2 H(+). The protein operates within purine metabolism; IMP biosynthesis via de novo pathway; 5-amino-1-(5-phospho-D-ribosyl)imidazole-4-carboxamide from 5-amino-1-(5-phospho-D-ribosyl)imidazole-4-carboxylate: step 1/2. The chain is Phosphoribosylaminoimidazole-succinocarboxamide synthase (purC) from Aquifex aeolicus (strain VF5).